The sequence spans 258 residues: MELIRVLANLLILQLSYAQKSSELVFGGDECNINEHRSLVVLFNSNGFLCGGTLINQDWVVTAAHCDSNNFQLLFGVHSKKILNEDEQTRDPKEKFFCPNRKKDDEVDKDIMLIKLDSSVSNSEHIAPLSLPSSPPSVGSVCRIMGWGKTIPTKEIYPDVPHCANINILDHAVCRTAYSWRQVANTTLCAGILQGGRDTCHFDSGGPLICNGIFQGIVSWGGHPCGQPGEPGVYTKVFDYLDWIKSIIAGNKDATCPP.

A signal peptide spans M1–A18. Residues Q19–L24 constitute a propeptide that is removed on maturation. The Peptidase S1 domain occupies V25–A249. Cystine bridges form between C31-C163, C50-C66, C98-C256, C142-C210, C174-C189, and C200-C225. Residues H65 and D110 each act as charge relay system in the active site. A glycan (N-linked (GlcNAc...) asparagine) is linked at N185. The active-site Charge relay system is S204.

This sequence belongs to the peptidase S1 family. Snake venom subfamily. As to quaternary structure, monomer. As to expression, expressed by the venom gland.

The protein localises to the secreted. Functionally, snake venom serine protease that activates plasminogen. This chain is Venom plasminogen activator TSV-PA, found in Trimeresurus stejnegeri (Chinese green tree viper).